The chain runs to 352 residues: Sphingosine 1-phosphate receptor 2 (352 aa).

Residues 1-34 (MGGLYSEYLNPEKVLEHYNYTKETLDMQETTSRK) lie on the Extracellular side of the membrane. Residue asparagine 19 is glycosylated (N-linked (GlcNAc...) asparagine). A helical membrane pass occupies residues 35-59 (VASAFIIILCCAIVVENLLVLIAVA). The Cytoplasmic portion of the chain corresponds to 60–66 (RNSKFHS). Residues 67–95 (AMYLFLGNLAASDLLAGVAFVANTLLSGH) traverse the membrane as a helical segment. Topologically, residues 96 to 109 (VTLSLTPVQWFARE) are extracellular. The chain crosses the membrane as a helical span at residues 110 to 128 (GSAFITLSASVFSLLAIAI). Topologically, residues 129–147 (ERQVALAKVKLYGSDKSCR) are cytoplasmic. A helical transmembrane segment spans residues 148–173 (MLMLIGASWLISLILGGLPILGWNCL). Residues 174–189 (NQLEACSTVLPLYAKH) lie on the Extracellular side of the membrane. Residues 190 to 210 (YVLCVVTIFSVILLAIVALYV) traverse the membrane as a helical segment. Topologically, residues 211–233 (RIYFVVRSSHADVAGPQTLALLK) are cytoplasmic. The chain crosses the membrane as a helical span at residues 234–255 (TVTIVLGVFIICWLPAFSILLL). Residues 256 to 271 (DSTCPVRACPVLYKAH) are Extracellular-facing. A helical membrane pass occupies residues 272–292 (YFFAFATLNSLLNPVIYTWRS). Topologically, residues 293 to 352 (RDLRREVLRPLQCWRRGKGVTGRRGGNPGHRLLPLRSSSSLERGMHMPTSPTFLEGNTVV) are cytoplasmic. The S-palmitoyl cysteine moiety is linked to residue cysteine 305. The tract at residues 333–352 (LERGMHMPTSPTFLEGNTVV) is disordered.

It belongs to the G-protein coupled receptor 1 family. Most abundant in heart and lung; low, but clearly observed in kidney, liver and thymus; much lower but detectable in brain, testis, stomach and intestine. Not significantly detected in any of the sections of embryonic day (E) 14-18, except in embryonic brain.

The protein localises to the cell membrane. Functionally, receptor for the lysosphingolipid sphingosine 1-phosphate (S1P). S1P is a bioactive lysophospholipid that elicits diverse physiological effects on most types of cells and tissues. Receptor for the chemokine-like protein FAM19A5. Mediates the inhibitory effect of FAM19A5 on vascular smooth muscle cell proliferation and migration. In lymphoid follicles, couples the binding of S1P to the activation of GNA13 and downstream inhibition of AKT activation leading to suppression of germinal center (GC) B cell growth and migration outside the GC niche. In Mus musculus (Mouse), this protein is Sphingosine 1-phosphate receptor 2 (S1pr2).